A 312-amino-acid chain; its full sequence is Zinc-finger homeodomain protein 9 (312 aa).

The tract at residues 1–27 (MLEVRSMDMTPKSPEPESETPTRIQPA) is disordered. S13 carries the phosphoserine modification. A ZF-HD dimerization-type; degenerate zinc finger spans residues 52–103 (YKECLKNHAAAIGGHALDGCGEFMPSPSSTPSDPTSLKCAACGCHRNFHRRE). Disordered stretches follow at residues 128 to 155 (QPHH…PPPI) and 253 to 312 (FSGG…SSSS). Residues 136–155 (PPPLAPPLPRSPNSSSPPPI) show a composition bias toward pro residues. The homeobox DNA-binding region spans 192 to 255 (RKRFRTKFSS…NNKNSFKFSG (64 aa)). S273 is modified (phosphoserine).

Homo- and heterodimer with other ZFHD proteins. Interacts with MIF3; this interaction prevents nuclear localization and DNA-binding to inhibit transcription regulation activity. Binds to ZHD1, ZHD2 and ZHD11. Mostly expressed in flowers, stems and inflorescence and, to a lower extent, in leaves and stems.

It is found in the nucleus. In terms of biological role, putative transcription factor. This chain is Zinc-finger homeodomain protein 9 (ZHD9), found in Arabidopsis thaliana (Mouse-ear cress).